The primary structure comprises 182 residues: MACSMISSATVAAVSRASPAQSSMVAPFTCLKSTSAFPVTQKTNNDITSIASNGGRVQCMQVWPPLGLKKFETLSYLPPLSSEQLAKEVDYLLRKNLIPCLEFELEHGFVYREHNRSPGYYDGRYWTMWKLPMFGCNDSSQVLKELEECKKAYPSAFIRIIGFDNKRQVQIISFIAYKPPGV.

A chloroplast-targeting transit peptide spans 1-58 (MACSMISSATVAAVSRASPAQSSMVAPFTCLKSTSAFPVTQKTNNDITSIASNGGRVQ).

The protein belongs to the RuBisCO small chain family. As to quaternary structure, heterohexadecamer of 8 large and 8 small subunits.

Its subcellular location is the plastid. It localises to the chloroplast. Its function is as follows. RuBisCO catalyzes two reactions: the carboxylation of D-ribulose 1,5-bisphosphate, the primary event in carbon dioxide fixation, as well as the oxidative fragmentation of the pentose substrate. Both reactions occur simultaneously and in competition at the same active site. Although the small subunit is not catalytic it is essential for maximal activity. This chain is Ribulose bisphosphate carboxylase small subunit, chloroplastic, found in Betula pendula (European white birch).